Here is a 474-residue protein sequence, read N- to C-terminus: ATP synthase subunit beta (474 aa).

158 to 165 is a binding site for ATP; sequence GGAGVGKT.

This sequence belongs to the ATPase alpha/beta chains family. F-type ATPases have 2 components, CF(1) - the catalytic core - and CF(0) - the membrane proton channel. CF(1) has five subunits: alpha(3), beta(3), gamma(1), delta(1), epsilon(1). CF(0) has three main subunits: a(1), b(2) and c(9-12). The alpha and beta chains form an alternating ring which encloses part of the gamma chain. CF(1) is attached to CF(0) by a central stalk formed by the gamma and epsilon chains, while a peripheral stalk is formed by the delta and b chains.

It is found in the cell membrane. It catalyses the reaction ATP + H2O + 4 H(+)(in) = ADP + phosphate + 5 H(+)(out). Produces ATP from ADP in the presence of a proton gradient across the membrane. The catalytic sites are hosted primarily by the beta subunits. This Tropheryma whipplei (strain Twist) (Whipple's bacillus) protein is ATP synthase subunit beta.